Here is a 402-residue protein sequence, read N- to C-terminus: Multidrug resistance protein MdtH (402 aa).

11 helical membrane passes run 13–33 (YFLLIDNMLVVLGFFVVFPLI), 34–54 (SIRFVDSLGWAALMVGIALGL), 99–116 (PWVLWLSCVLSGLGGTLF), 139–159 (LLMMQDSAGAVTGALIGSWLL), 165–185 (LVCGVGALLFVLCAGFNAWLL), 214–234 (VLTLTGYYMLAVQVMLMLPVM), 243–263 (AAVKWMYAIEAVLSLTLLYPL), 277–297 (LMAGLLVMTFSLVPIGLASNL), 300–320 (LFTLICLFYIGSIIAEPARET), 340–360 (LGLAFGGALGYAGGGWLFDAG), and 368–388 (LPWAMLGVIGVGTFLMLWWQF).

It belongs to the major facilitator superfamily. DHA1 family. MdtH (TC 2.A.1.2.21) subfamily.

The protein resides in the cell inner membrane. The protein is Multidrug resistance protein MdtH of Cronobacter sakazakii (strain ATCC BAA-894) (Enterobacter sakazakii).